Reading from the N-terminus, the 159-residue chain is SsrA-binding protein (159 aa).

The protein belongs to the SmpB family.

The protein resides in the cytoplasm. Functionally, required for rescue of stalled ribosomes mediated by trans-translation. Binds to transfer-messenger RNA (tmRNA), required for stable association of tmRNA with ribosomes. tmRNA and SmpB together mimic tRNA shape, replacing the anticodon stem-loop with SmpB. tmRNA is encoded by the ssrA gene; the 2 termini fold to resemble tRNA(Ala) and it encodes a 'tag peptide', a short internal open reading frame. During trans-translation Ala-aminoacylated tmRNA acts like a tRNA, entering the A-site of stalled ribosomes, displacing the stalled mRNA. The ribosome then switches to translate the ORF on the tmRNA; the nascent peptide is terminated with the 'tag peptide' encoded by the tmRNA and targeted for degradation. The ribosome is freed to recommence translation, which seems to be the essential function of trans-translation. The sequence is that of SsrA-binding protein from Coxiella burnetii (strain RSA 493 / Nine Mile phase I).